Consider the following 223-residue polypeptide: Germin-like protein subfamily 1 member 10 (223 aa).

Residues 1–24 (MAMKSLSFLAALSLLALTLPLTIA) form the signal peptide. Cysteine 34 and cysteine 51 are oxidised to a cystine. Asparagine 38 carries N-linked (GlcNAc...) asparagine glycosylation. The 151-residue stretch at 65-215 (PGLQTARPIT…AFQVDPRVVM (151 aa)) folds into the Cupin type-1 domain. Mn(2+)-binding residues include histidine 113, histidine 115, glutamate 120, and histidine 161.

The protein belongs to the germin family. As to quaternary structure, oligomer (believed to be a pentamer but probably hexamer).

The protein resides in the secreted. It is found in the extracellular space. Its subcellular location is the apoplast. Its function is as follows. May play a role in plant defense. Probably has no oxalate oxidase activity even if the active site is conserved. The protein is Germin-like protein subfamily 1 member 10 of Arabidopsis thaliana (Mouse-ear cress).